Consider the following 133-residue polypeptide: Nickel-responsive regulator (133 aa).

The Ni(2+) site is built by H76, H87, H89, and C95.

This sequence belongs to the transcriptional regulatory CopG/NikR family. As to quaternary structure, homotetramer. The cofactor is Ni(2+).

Functionally, transcriptional repressor of the nikABCDE operon. Is active in the presence of excessive concentrations of intracellular nickel. The protein is Nickel-responsive regulator of Escherichia coli (strain SMS-3-5 / SECEC).